We begin with the raw amino-acid sequence, 340 residues long: MAPKIPLNVIFLGTDEFSIPILRKLIGCVQRVRVVSAGGKRQSRRGEIPLPPAAMEANANGLEYIKLQDGWKNFHMRPDDQLAITASFGRFVPFKILNQLPYGGINIHPSLLPKYRGAGPVYSTILNGDRLAGVTIQTMDSKQFDKGKSLAQAYLKLNGKETYTLLTKILSLGAAGMLEHVLLQSLYLPNCQTNTVAPQIHGRITDTGGLQLISKETFPSFQESWAKKITPEDAHVNFESMNTQQIYNMSRAFNHVWCILNNKKVFLYDVHPLHSTSAEDWIHMKPGEFALLEKNLLLVKTLDHVMVIKGGIRLSARKIVDPVEWGKTFNSGRGGRFQYV.

Belongs to the Fmt family.

The protein localises to the mitochondrion. It is found in the mitochondrion matrix. It localises to the cytoplasm. The catalysed reaction is L-methionyl-tRNA(fMet) + (6R)-10-formyltetrahydrofolate = N-formyl-L-methionyl-tRNA(fMet) + (6S)-5,6,7,8-tetrahydrofolate + H(+). Functionally, formylates methionyl-tRNA in mitochondria and the cytoplasm. Responsible for the formylation of the N-terminally formylated (Nt-formylated) mitochondrial matrix proteins that are encoded by mitochondrial DNA. Nt-formylated proteins in the cytoplasm are strongly up-regulated in stationary phase or upon starvation for specific amino acids and are targeted for degradation by an E3 ubiquitin ligase-mediated fMet/N-end rule pathway. Increased Nt-formylation of cytosolic proteins appears to be important for adaptation to these stresses. The polypeptide is Putative methionyl-tRNA formyltransferase (fmt1) (Schizosaccharomyces pombe (strain 972 / ATCC 24843) (Fission yeast)).